Consider the following 236-residue polypeptide: 15,16-dihydrobiliverdin:ferredoxin oxidoreductase (236 aa).

The protein belongs to the HY2 family.

It carries out the reaction 15,16-dihydrobiliverdin + oxidized 2[4Fe-4S]-[ferredoxin] = biliverdin IXalpha + reduced 2[4Fe-4S]-[ferredoxin] + 2 H(+). Functionally, catalyzes the two-electron reduction of biliverdin IX-alpha at the C15 methine bridge. The chain is 15,16-dihydrobiliverdin:ferredoxin oxidoreductase from Prochlorococcus marinus (strain MIT 9215).